Reading from the N-terminus, the 192-residue chain is Molybdenum cofactor guanylyltransferase (192 aa).

GTP contacts are provided by residues 10 to 12 (LAG), Lys-23, Asn-51, Asp-69, and Asp-99. Asp-99 is a binding site for Mg(2+).

The protein belongs to the MobA family. In terms of assembly, monomer. Requires Mg(2+) as cofactor.

It is found in the cytoplasm. The enzyme catalyses Mo-molybdopterin + GTP + H(+) = Mo-molybdopterin guanine dinucleotide + diphosphate. Functionally, transfers a GMP moiety from GTP to Mo-molybdopterin (Mo-MPT) cofactor (Moco or molybdenum cofactor) to form Mo-molybdopterin guanine dinucleotide (Mo-MGD) cofactor. The sequence is that of Molybdenum cofactor guanylyltransferase from Haemophilus influenzae (strain 86-028NP).